A 93-amino-acid chain; its full sequence is Large ribosomal subunit protein eL42 (93 aa).

Residues Cys11, Cys14, Cys71, and Cys74 each coordinate Zn(2+). Residues 11-74 (CRYCGKHTLH…VNIRFRCTEC (64 aa)) form a C4-type zinc finger.

This sequence belongs to the eukaryotic ribosomal protein eL42 family. In terms of assembly, part of the 50S ribosomal subunit. It depends on Zn(2+) as a cofactor.

Binds to the 23S rRNA. The sequence is that of Large ribosomal subunit protein eL42 from Archaeoglobus fulgidus (strain ATCC 49558 / DSM 4304 / JCM 9628 / NBRC 100126 / VC-16).